The following is a 214-amino-acid chain: Calcineurin B-like protein 8 (214 aa).

EF-hand domains are found at residues 35–70 (EIEA…RNGS), 71–106 (MQNL…FHPY), 108–143 (PEHE…LLGE), and 152–187 (SIEA…NPSI). Aspartate 165, asparagine 167, aspartate 169, lysine 171, and glutamate 176 together coordinate Ca(2+). A Phosphoserine modification is found at serine 205.

The protein belongs to the calcineurin regulatory subunit family. Interacts with CIPK23. Interacts with CIPK14 at the cell membrane exclusively.

It localises to the cytoplasm. The protein localises to the nucleus. The protein resides in the cell membrane. Functionally, acts as a calcium sensor. CBL proteins interact with CIPK serine-threonine protein kinases. Binding of a CBL protein to the regulatory NAF domain of a CIPK protein lead to the activation of the kinase in a calcium-dependent manner. The sequence is that of Calcineurin B-like protein 8 (CBL8) from Arabidopsis thaliana (Mouse-ear cress).